Consider the following 114-residue polypeptide: Iron-sulfur cluster insertion protein ErpA (114 aa).

Residues C42, C106, and C108 each coordinate iron-sulfur cluster.

It belongs to the HesB/IscA family. As to quaternary structure, homodimer. Iron-sulfur cluster serves as cofactor.

Its function is as follows. Required for insertion of 4Fe-4S clusters for at least IspG. In Citrobacter koseri (strain ATCC BAA-895 / CDC 4225-83 / SGSC4696), this protein is Iron-sulfur cluster insertion protein ErpA.